The sequence spans 396 residues: Pre-mycofactocin synthase (396 aa).

The 383-residue stretch at 1–383 (MAEAWFETVA…SPADILVPTG (383 aa)) folds into the FMN hydroxy acid dehydrogenase domain. FMN contacts are provided by Ser108, Gln128, Thr156, and Lys254. His278 functions as the Proton acceptor in the catalytic mechanism. FMN-binding positions include 309–313 (DGGIR) and 332–333 (GR).

This sequence belongs to the FMN-dependent alpha-hydroxy acid dehydrogenase family. It depends on FMN as a cofactor.

It catalyses the reaction 3-amino-5-[(4-hydroxyphenyl)methyl]-4,4-dimethyl-2-pyrrolidin-2-one + O2 + H2O = pre-mycofactocin + H2O2 + NH4(+). In terms of biological role, involved in the biosynthesis of the enzyme cofactor mycofactocin (MFT). Catalyzes the oxidative deamination of AHDP (3-amino-5-[(4-hydroxyphenyl)methyl]-4,4-dimethyl-2-pyrrolidin-2-one), forming an alpha-keto amide moiety on the resulting molecule, which is called pre-mycofactocin (PMFT). This reaction occurs via a 5-[(4-hydroxyphenyl)methyl]-3-imino-4,4-dimethylpyrrolidin-2-one intermediate, which converts to PMFT. The alpha-keto amide moiety is the redox-active center for the redox activity of mycofactocin. This Mycobacterium tuberculosis (strain CDC 1551 / Oshkosh) protein is Pre-mycofactocin synthase (mftD).